A 258-amino-acid polypeptide reads, in one-letter code: UPF0246 protein LHK_02295 (258 aa).

The protein belongs to the UPF0246 family.

The sequence is that of UPF0246 protein LHK_02295 from Laribacter hongkongensis (strain HLHK9).